Reading from the N-terminus, the 366-residue chain is uncharacterized protein (366 aa).

Residues 63 to 288 (ARVAMVGFPS…LLEKMWEYLA (226 aa)) enclose the OBG-type G domain. GTP contacts are provided by residues 69–76 (GFPSVGKS), 115–119 (DLPGI), and 246–249 (NKVD). A TGS domain is found at 288–365 (ALVRVYTKKP…DHEDVIQIVK (78 aa)).

Belongs to the TRAFAC class OBG-HflX-like GTPase superfamily. OBG GTPase family.

This is an uncharacterized protein from Caenorhabditis elegans.